We begin with the raw amino-acid sequence, 438 residues long: Mannan endo-1,4-beta-mannosidase F (438 aa).

Positions 1–17 (MHPLPSVALLSAIGAVA) are cleaved as a signal peptide. The CBM1 domain maps to 19–54 (QVGPWGQCGGRSYTGETSCVSGWSCVLFNEWYSQCQ). The interval 60–96 (STSSVSATAAPSSTSSSKESVPSATTSKKPVPTGSSS) is ser-rich linker. Residues 61 to 86 (TSSVSATAAPSSTSSSKESVPSATTS) show a composition bias toward low complexity. Positions 61–92 (TSSVSATAAPSSTSSSKESVPSATTSKKPVPT) are disordered. The interval 97-438 (FVKADGLKFN…CGVADHLSTL (342 aa)) is catalytic. 2 residues coordinate substrate: W149 and N263. E264 serves as the catalytic Proton donor. N-linked (GlcNAc...) asparagine glycosylation occurs at N277. Y339 lines the substrate pocket. The Nucleophile role is filled by E373. W402 is a substrate binding site.

It belongs to the glycosyl hydrolase 5 (cellulase A) family.

The protein localises to the secreted. It catalyses the reaction Random hydrolysis of (1-&gt;4)-beta-D-mannosidic linkages in mannans, galactomannans and glucomannans.. In terms of biological role, endo-1,4-mannanase, a crucial enzyme for depolymerization of seed galactomannans and wood galactoglucomannans. This chain is Mannan endo-1,4-beta-mannosidase F (manF), found in Aspergillus fumigatus (strain ATCC MYA-4609 / CBS 101355 / FGSC A1100 / Af293) (Neosartorya fumigata).